A 381-amino-acid chain; its full sequence is Dual-specificity RNA methyltransferase RlmN (381 aa).

Glu95 acts as the Proton acceptor in catalysis. The 247-residue stretch at 101–347 folds into the Radical SAM core domain; it reads EDDRGTLCVS…TTVRKTRGDD (247 aa). Cys108 and Cys352 are disulfide-bonded. The [4Fe-4S] cluster site is built by Cys115, Cys119, and Cys122. Residues 178 to 179, Ser210, 232 to 234, and Asn309 contribute to the S-adenosyl-L-methionine site; these read GE and SLH. Catalysis depends on Cys352, which acts as the S-methylcysteine intermediate.

The protein belongs to the radical SAM superfamily. RlmN family. Requires [4Fe-4S] cluster as cofactor.

The protein localises to the cytoplasm. It catalyses the reaction adenosine(2503) in 23S rRNA + 2 reduced [2Fe-2S]-[ferredoxin] + 2 S-adenosyl-L-methionine = 2-methyladenosine(2503) in 23S rRNA + 5'-deoxyadenosine + L-methionine + 2 oxidized [2Fe-2S]-[ferredoxin] + S-adenosyl-L-homocysteine. The catalysed reaction is adenosine(37) in tRNA + 2 reduced [2Fe-2S]-[ferredoxin] + 2 S-adenosyl-L-methionine = 2-methyladenosine(37) in tRNA + 5'-deoxyadenosine + L-methionine + 2 oxidized [2Fe-2S]-[ferredoxin] + S-adenosyl-L-homocysteine. Specifically methylates position 2 of adenine 2503 in 23S rRNA and position 2 of adenine 37 in tRNAs. m2A2503 modification seems to play a crucial role in the proofreading step occurring at the peptidyl transferase center and thus would serve to optimize ribosomal fidelity. This Bordetella petrii (strain ATCC BAA-461 / DSM 12804 / CCUG 43448) protein is Dual-specificity RNA methyltransferase RlmN.